The sequence spans 782 residues: Transcription factor SOX-30 (782 aa).

3 disordered regions span residues 1-37, 95-117, and 139-226; these read MERA…AQPV, LPPG…AAAA, and PPQS…DALK. Composition is skewed to pro residues over residues 7 to 35 and 97 to 106; these read EPPP…PPAQ and PGGPGVPPAP. The span at 203-226 shows a compositional bias: basic and acidic residues; that stretch reads LDGRRSDEKKAKLEAEEAPRDALK. A DNA-binding region (HMG box) is located at residues 366 to 434; that stretch reads VKRPMNAFMV…KHREEFPGWV (69 aa). Disordered regions lie at residues 501–604, 704–724, and 756–782; these read PTPA…STCP, YPDE…DGPP, and ASAP…LRNL. A compositionally biased stretch (polar residues) spans 512-522; it reads TLFQPSVSSTG. Over residues 525 to 538 the composition is skewed to pro residues; it reads AVPPPSLTPRPSLP. The span at 555–574 shows a compositional bias: polar residues; it reads SGSSRSVKRSTPGSLESTTR. The span at 704 to 718 shows a compositional bias: basic and acidic residues; the sequence is YPDEHTHSEDSRSCE.

As to quaternary structure, interacts with CTNNB1, competitively inhibiting CTNNB1-TCF7L2/TCF4 interaction. As to expression, expressed in the lung (at protein level). Expressed in testes (at protein level). Expressed in preleptotene spermatocytes, round spermatids, and elongated spermatids in the testis (at protein level). Expressed in pachytene spermatocytes during stages 3 to 8 of spermatogenesis (at protein level). Increased expression in diplotene spermatocytes at stage 9-11 and in metaphase spermatocytes or secondary spermatocytes at stage 12. Expressed in ovaries.

It is found in the nucleus. The protein resides in the cytoplasm. Functionally, acts both as a transcriptional activator and a repressor. Binds to the DNA sequence 5'-ACAAT-3' and shows a preference for guanine residues surrounding this core motif. Binds to its own promoter and activates its own transcription. Required to activate the expression of postmeiotic genes involved in spermiogenesis. Binds to the promoter region of CTNNB1 and represses its transcription which leads to inhibition of Wnt signaling. Also inhibits Wnt signaling by binding to the CTNNB1 protein, preventing interaction of CTNNB1 with TCF7L2/TCF4. The chain is Transcription factor SOX-30 (Sox30) from Mus musculus (Mouse).